A 249-amino-acid polypeptide reads, in one-letter code: Pulmonary surfactant-associated protein A (249 aa).

An N-terminal signal peptide occupies residues 1–20; sequence MLRWPLALTFLLLAVSGLEC. In terms of domain architecture, Collagen-like spans 28 to 100; the sequence is ASPGIPGTPG…PGERGPPGLP (73 aa). The segment at 29-102 is disordered; sequence SPGIPGTPGS…ERGPPGLPAH (74 aa). Residues Pro30, Pro33, Pro36, Pro42, Pro54, Pro57, Pro63, and Pro70 each carry the 4-hydroxyproline modification. Residues 42-51 show a composition bias toward basic and acidic residues; sequence PGRDGRDGIK. A compositionally biased stretch (basic and acidic residues) spans 84-93; sequence ERGEKGEPGE. One can recognise a C-type lectin domain in the interval 133-249; it reads AVGEKVFSTN…QQYRLAICEF (117 aa). Intrachain disulfides connect Cys155–Cys247 and Cys225–Cys239. Residue Asn208 is glycosylated (N-linked (GlcNAc...) asparagine). Ca(2+) is bound by residues Glu216, Arg218, Asn235, and Asp236.

Belongs to the SFTPA family. In terms of assembly, oligomeric complex of 6 set of homotrimers.

It is found in the secreted. The protein localises to the extracellular space. The protein resides in the extracellular matrix. It localises to the surface film. In presence of calcium ions, it binds to surfactant phospholipids and contributes to lower the surface tension at the air-liquid interface in the alveoli of the mammalian lung and is essential for normal respiration. Enhances the expression of MYO18A/SP-R210 on alveolar macrophages. The chain is Pulmonary surfactant-associated protein A (SFTPA1) from Sus scrofa (Pig).